A 231-amino-acid polypeptide reads, in one-letter code: Probable transglycosylase SceD (231 aa).

Residues 1–27 (MKKTLLASSLAVGLGIVAGNAGHEAQA) form the signal peptide. Positions 92-153 (MSAQAPATNN…ESKASEGSSV (62 aa)) are disordered. The span at 96 to 116 (APATNNVAPSADQSNQVQSQE) shows a compositional bias: polar residues. Residues 119–137 (APQNAQTQQPQASTSNNSQ) show a composition bias toward low complexity. Over residues 138–153 (VTATPTESKASEGSSV) the composition is skewed to polar residues.

The protein belongs to the transglycosylase family. SceD subfamily.

The protein localises to the secreted. Its function is as follows. Is able to cleave peptidoglycan and affects clumping and separation of bacterial cells. The protein is Probable transglycosylase SceD (sceD) of Staphylococcus aureus (strain MRSA252).